Reading from the N-terminus, the 198-residue chain is ATP-dependent Clp protease proteolytic subunit (198 aa).

Catalysis depends on S103, which acts as the Nucleophile. H128 is an active-site residue.

This sequence belongs to the peptidase S14 family. As to quaternary structure, fourteen ClpP subunits assemble into 2 heptameric rings which stack back to back to give a disk-like structure with a central cavity, resembling the structure of eukaryotic proteasomes.

The protein localises to the cytoplasm. The catalysed reaction is Hydrolysis of proteins to small peptides in the presence of ATP and magnesium. alpha-casein is the usual test substrate. In the absence of ATP, only oligopeptides shorter than five residues are hydrolyzed (such as succinyl-Leu-Tyr-|-NHMec, and Leu-Tyr-Leu-|-Tyr-Trp, in which cleavage of the -Tyr-|-Leu- and -Tyr-|-Trp bonds also occurs).. In terms of biological role, cleaves peptides in various proteins in a process that requires ATP hydrolysis. Has a chymotrypsin-like activity. Plays a major role in the degradation of misfolded proteins. The polypeptide is ATP-dependent Clp protease proteolytic subunit (Vesicomyosocius okutanii subsp. Calyptogena okutanii (strain HA)).